We begin with the raw amino-acid sequence, 206 residues long: ATP-dependent dethiobiotin synthetase BioD (206 aa).

12–17 is an ATP binding site; it reads GVGKTI. Thr16 is a Mg(2+) binding site. The active site involves Lys32. Mg(2+) contacts are provided by His46 and Glu98. 98–101 is an ATP binding site; sequence EGAG.

This sequence belongs to the dethiobiotin synthetase family. As to quaternary structure, homodimer. Mg(2+) is required as a cofactor.

It localises to the cytoplasm. The enzyme catalyses (7R,8S)-7,8-diammoniononanoate + CO2 + ATP = (4R,5S)-dethiobiotin + ADP + phosphate + 3 H(+). It participates in cofactor biosynthesis; biotin biosynthesis; biotin from 7,8-diaminononanoate: step 1/2. Its function is as follows. Catalyzes a mechanistically unusual reaction, the ATP-dependent insertion of CO2 between the N7 and N8 nitrogen atoms of 7,8-diaminopelargonic acid (DAPA, also called 7,8-diammoniononanoate) to form a ureido ring. The protein is ATP-dependent dethiobiotin synthetase BioD of Novosphingobium aromaticivorans (strain ATCC 700278 / DSM 12444 / CCUG 56034 / CIP 105152 / NBRC 16084 / F199).